A 141-amino-acid chain; its full sequence is Nucleoside diphosphate kinase (141 aa).

6 residues coordinate ATP: lysine 11, phenylalanine 59, arginine 87, threonine 93, arginine 104, and asparagine 114. Residue histidine 117 is the Pros-phosphohistidine intermediate of the active site.

Belongs to the NDK family. Homotetramer. Mg(2+) is required as a cofactor.

It is found in the cytoplasm. It catalyses the reaction a 2'-deoxyribonucleoside 5'-diphosphate + ATP = a 2'-deoxyribonucleoside 5'-triphosphate + ADP. It carries out the reaction a ribonucleoside 5'-diphosphate + ATP = a ribonucleoside 5'-triphosphate + ADP. Major role in the synthesis of nucleoside triphosphates other than ATP. The ATP gamma phosphate is transferred to the NDP beta phosphate via a ping-pong mechanism, using a phosphorylated active-site intermediate. This Legionella pneumophila subsp. pneumophila (strain Philadelphia 1 / ATCC 33152 / DSM 7513) protein is Nucleoside diphosphate kinase.